A 217-amino-acid chain; its full sequence is Transcriptional regulator NovE (217 aa).

The disordered stretch occupies residues 1–41 (MVASGRTASKGRGNGATPVRPTAGDATPVDSGQPSDTTYGG).

In terms of biological role, transcription regulator that specifically regulates expression of genes involved in the novobiocin biosynthesis pathway. Probably acts as a positive regulator of transcription. Does not bind DNA. The sequence is that of Transcriptional regulator NovE (novE) from Streptomyces niveus (Streptomyces spheroides).